The primary structure comprises 380 residues: Probable acyl-CoA dehydrogenase YngJ (380 aa).

Residues 123–132 (FGLTEPNAGS), 156–158 (WIT), R269, and 337–341 (QIHGG) each bind FAD. The active-site Proton acceptor is the E364. 366 to 368 (TSE) contributes to the FAD binding site.

It belongs to the acyl-CoA dehydrogenase family. It depends on FAD as a cofactor.

The catalysed reaction is a 2,3-saturated acyl-CoA + A = a 2,3-dehydroacyl-CoA + AH2. This chain is Probable acyl-CoA dehydrogenase YngJ (yngJ), found in Bacillus subtilis (strain 168).